The following is a 176-amino-acid chain: Ribosome maturation factor RimM (176 aa).

Residues 99–174 enclose the PRC barrel domain; the sequence is KDEFYVRDLI…IVLIQPELWN (76 aa).

Belongs to the RimM family. In terms of assembly, binds ribosomal protein uS19.

It localises to the cytoplasm. In terms of biological role, an accessory protein needed during the final step in the assembly of 30S ribosomal subunit, possibly for assembly of the head region. Essential for efficient processing of 16S rRNA. May be needed both before and after RbfA during the maturation of 16S rRNA. It has affinity for free ribosomal 30S subunits but not for 70S ribosomes. This chain is Ribosome maturation factor RimM, found in Leptospira borgpetersenii serovar Hardjo-bovis (strain JB197).